A 169-amino-acid polypeptide reads, in one-letter code: MNKLLYLAGRILKPKGLKGELKVLPETDFPESFLQRKLLLVGATEQSAVERRVAGATLQNGFVLLRFYGIDSREDAESIVGERIYITEDDLIPLPPDTAYIHDLVGLRVLDEDCREIGVIRDVLKLPAHEVYEIAAGDKIVLVPAIEEFVVETDLEKGEMTIRRFDEFL.

One can recognise a PRC barrel domain in the interval 95–168; it reads PPDTAYIHDL…EMTIRRFDEF (74 aa).

It belongs to the RimM family. As to quaternary structure, binds ribosomal protein uS19.

It is found in the cytoplasm. In terms of biological role, an accessory protein needed during the final step in the assembly of 30S ribosomal subunit, possibly for assembly of the head region. Essential for efficient processing of 16S rRNA. May be needed both before and after RbfA during the maturation of 16S rRNA. It has affinity for free ribosomal 30S subunits but not for 70S ribosomes. The chain is Ribosome maturation factor RimM from Prosthecochloris aestuarii (strain DSM 271 / SK 413).